Here is a 284-residue protein sequence, read N- to C-terminus: Bifunctional protein FolD (284 aa).

NADP(+)-binding positions include 166-168 and serine 191; that span reads GRS.

It belongs to the tetrahydrofolate dehydrogenase/cyclohydrolase family. Homodimer.

The enzyme catalyses (6R)-5,10-methylene-5,6,7,8-tetrahydrofolate + NADP(+) = (6R)-5,10-methenyltetrahydrofolate + NADPH. It catalyses the reaction (6R)-5,10-methenyltetrahydrofolate + H2O = (6R)-10-formyltetrahydrofolate + H(+). It participates in one-carbon metabolism; tetrahydrofolate interconversion. Functionally, catalyzes the oxidation of 5,10-methylenetetrahydrofolate to 5,10-methenyltetrahydrofolate and then the hydrolysis of 5,10-methenyltetrahydrofolate to 10-formyltetrahydrofolate. The polypeptide is Bifunctional protein FolD (Delftia acidovorans (strain DSM 14801 / SPH-1)).